A 421-amino-acid chain; its full sequence is Forkhead box protein fkh-3 (421 aa).

Residues 118–218 constitute a DNA-binding region (fork-head); it reads RPPISYVALC…SDADFDFFRK (101 aa).

It localises to the nucleus. Functionally, transcription factor. Binds to DNA sequence motif 5'-CTGTTTCA-3'. Regulates expression of a class of small RNAs, known as 21U-RNAs, perhaps acting redundantly with fkh-4 and fkh-5. This is Forkhead box protein fkh-3 from Caenorhabditis elegans.